We begin with the raw amino-acid sequence, 471 residues long: MKLPNKLGPIHFIGIGGIGMSGIAEVMHNLGYTVQGSDAADNYNVKRLAEKGIRTFVGHRAENLAEAELVVVSTAIRRDNPELAMARERRLPVVRRAEMLAELMRFKSCVAVAGTHGKTTTTSLVATLLDAGGLDPTVINGGIINAYGTNARMGEGEWMVVEADESDGTFLKLPADIAIVTNIDPEHLDHFGSFDAIKDAFRAFIDNIPFYGFAVMCIDHPTVQDLVGRIEDRRIITYGENPQADVRLIDVDLRGGQSRFRVMIRDRRPGFRLEMEDLVLPMPGKHNALNATAALAVAHELGVAPEAIRRALAGFGGVKRRFTRTGEWNGAQIFDDYGHHPVEIKAVLKAARASTEGNVVAVVQPHRYTRLASLFDDFCTCFNDADTVIVAPVYAAGEAPIEGFDRDTLVAGLKSRGHRNAVALERSEDLAGLVNGLVGPGDYVVCLGAGNITQWAYALPGELSALGEKAA.

ATP is bound at residue 114-120; it reads GTHGKTT.

The protein belongs to the MurCDEF family.

It localises to the cytoplasm. It catalyses the reaction UDP-N-acetyl-alpha-D-muramate + L-alanine + ATP = UDP-N-acetyl-alpha-D-muramoyl-L-alanine + ADP + phosphate + H(+). It participates in cell wall biogenesis; peptidoglycan biosynthesis. In terms of biological role, cell wall formation. The polypeptide is UDP-N-acetylmuramate--L-alanine ligase (Methylobacterium sp. (strain 4-46)).